We begin with the raw amino-acid sequence, 323 residues long: Iron-sulfur cluster transfer protein NUBPL (323 aa).

65-72 is an ATP binding site; that stretch reads AKGGVGKS.

This sequence belongs to the Mrp/NBP35 ATP-binding proteins family. The cofactor is [4Fe-4S] cluster.

Its subcellular location is the mitochondrion. In terms of biological role, iron-sulfur cluster transfer protein involved in the assembly of the mitochondrial membrane respiratory chain NADH dehydrogenase (Complex I). May deliver one or more Fe-S clusters to complex I subunits. This chain is Iron-sulfur cluster transfer protein NUBPL (nubpl), found in Dictyostelium discoideum (Social amoeba).